We begin with the raw amino-acid sequence, 151 residues long: Phosphopantetheine adenylyltransferase (151 aa).

Thr-9 contributes to the substrate binding site. Residues 9–10 (TF) and His-17 contribute to the ATP site. Substrate contacts are provided by Lys-41, Thr-73, and Arg-87. ATP-binding positions include 88–90 (GIR), Glu-98, and 122–128 (LTCVSST).

It belongs to the bacterial CoaD family. Homohexamer. Mg(2+) serves as cofactor.

The protein resides in the cytoplasm. It carries out the reaction (R)-4'-phosphopantetheine + ATP + H(+) = 3'-dephospho-CoA + diphosphate. The protein operates within cofactor biosynthesis; coenzyme A biosynthesis; CoA from (R)-pantothenate: step 4/5. Its function is as follows. Reversibly transfers an adenylyl group from ATP to 4'-phosphopantetheine, yielding dephospho-CoA (dPCoA) and pyrophosphate. This chain is Phosphopantetheine adenylyltransferase, found in Bacteroides thetaiotaomicron (strain ATCC 29148 / DSM 2079 / JCM 5827 / CCUG 10774 / NCTC 10582 / VPI-5482 / E50).